Reading from the N-terminus, the 144-residue chain is 3-hydroxyacyl-[acyl-carrier-protein] dehydratase FabZ (144 aa).

Residue histidine 52 is part of the active site.

Belongs to the thioester dehydratase family. FabZ subfamily.

The protein resides in the cytoplasm. The catalysed reaction is a (3R)-hydroxyacyl-[ACP] = a (2E)-enoyl-[ACP] + H2O. Involved in unsaturated fatty acids biosynthesis. Catalyzes the dehydration of short chain beta-hydroxyacyl-ACPs and long chain saturated and unsaturated beta-hydroxyacyl-ACPs. The protein is 3-hydroxyacyl-[acyl-carrier-protein] dehydratase FabZ of Syntrophomonas wolfei subsp. wolfei (strain DSM 2245B / Goettingen).